Here is a 267-residue protein sequence, read N- to C-terminus: 4-hydroxy-tetrahydrodipicolinate reductase (267 aa).

Residues 8–13 (GAAGRM) and aspartate 34 each bind NAD(+). Residue arginine 35 participates in NADP(+) binding. NAD(+) is bound by residues 98–100 (GTT) and 122–125 (AANF). Histidine 155 acts as the Proton donor/acceptor in catalysis. Histidine 156 provides a ligand contact to (S)-2,3,4,5-tetrahydrodipicolinate. The active-site Proton donor is the lysine 159. A (S)-2,3,4,5-tetrahydrodipicolinate-binding site is contributed by 165–166 (GT).

It belongs to the DapB family.

Its subcellular location is the cytoplasm. The catalysed reaction is (S)-2,3,4,5-tetrahydrodipicolinate + NAD(+) + H2O = (2S,4S)-4-hydroxy-2,3,4,5-tetrahydrodipicolinate + NADH + H(+). It carries out the reaction (S)-2,3,4,5-tetrahydrodipicolinate + NADP(+) + H2O = (2S,4S)-4-hydroxy-2,3,4,5-tetrahydrodipicolinate + NADPH + H(+). It functions in the pathway amino-acid biosynthesis; L-lysine biosynthesis via DAP pathway; (S)-tetrahydrodipicolinate from L-aspartate: step 4/4. Functionally, catalyzes the conversion of 4-hydroxy-tetrahydrodipicolinate (HTPA) to tetrahydrodipicolinate. The protein is 4-hydroxy-tetrahydrodipicolinate reductase of Ectopseudomonas mendocina (strain ymp) (Pseudomonas mendocina).